Reading from the N-terminus, the 585-residue chain is Arginine--tRNA ligase (585 aa).

Residues 131–141 (ANPTGPMHVGH) carry the 'HIGH' region motif.

The protein belongs to the class-I aminoacyl-tRNA synthetase family. As to quaternary structure, monomer.

The protein localises to the cytoplasm. The enzyme catalyses tRNA(Arg) + L-arginine + ATP = L-arginyl-tRNA(Arg) + AMP + diphosphate. The chain is Arginine--tRNA ligase from Rhizobium etli (strain CIAT 652).